We begin with the raw amino-acid sequence, 345 residues long: 1-aminocyclopropane-1-carboxylate oxidase homolog 7 (345 aa).

A Glycyl lysine isopeptide (Lys-Gly) (interchain with G-Cter in ubiquitin) cross-link involves residue Lys-16. In terms of domain architecture, Fe2OG dioxygenase spans 194–293; sequence KGLHMICHYY…RISIACFFSS (100 aa). The Fe cation site is built by His-218, Asp-220, and His-274. Arg-284 lines the 2-oxoglutarate pocket.

Belongs to the iron/ascorbate-dependent oxidoreductase family. The cofactor is Fe(2+).

This is 1-aminocyclopropane-1-carboxylate oxidase homolog 7 from Arabidopsis thaliana (Mouse-ear cress).